A 285-amino-acid polypeptide reads, in one-letter code: Probable endonuclease 4 (285 aa).

Residues His69, His109, Glu145, Asp179, His182, His216, Asp229, His231, and Glu261 each coordinate Zn(2+).

This sequence belongs to the AP endonuclease 2 family. The cofactor is Zn(2+).

It catalyses the reaction Endonucleolytic cleavage to 5'-phosphooligonucleotide end-products.. Its function is as follows. Endonuclease IV plays a role in DNA repair. It cleaves phosphodiester bonds at apurinic or apyrimidinic (AP) sites, generating a 3'-hydroxyl group and a 5'-terminal sugar phosphate. The sequence is that of Probable endonuclease 4 from Salmonella paratyphi C (strain RKS4594).